A 326-amino-acid chain; its full sequence is Homocysteine S-methyltransferase 1 (326 aa).

The Hcy-binding domain maps to 9–323 (LLEDLIEKCG…STIKAISRDL (315 aa)). 3 residues coordinate Zn(2+): C241, C308, and C309.

It depends on Zn(2+) as a cofactor. In terms of tissue distribution, expressed in roots, young leaves, florets and flowers. Not detected in old leaves.

The enzyme catalyses S-methyl-L-methionine + L-homocysteine = 2 L-methionine + H(+). Inhibited by L-methionine. Functionally, catalyzes methyl transfer from S-methylmethionine to homocysteine. The highest preference is for DL-homocysteine &gt;&gt; DL-cysteine. Has no selenocysteine methyltransferase activity. The polypeptide is Homocysteine S-methyltransferase 1 (HMT1) (Brassica oleracea var. italica (Broccoli)).